A 252-amino-acid chain; its full sequence is DNA repair protein RecO (252 aa).

It belongs to the RecO family.

Its function is as follows. Involved in DNA repair and RecF pathway recombination. The sequence is that of DNA repair protein RecO from Rhodospirillum rubrum (strain ATCC 11170 / ATH 1.1.1 / DSM 467 / LMG 4362 / NCIMB 8255 / S1).